Reading from the N-terminus, the 356-residue chain is Metacaspase-1 (356 aa).

The disordered stretch occupies residues 1–47 (MYSGRSGAPPPAHSPYPNSYNHGPPGHSAGHNVPPPPPTQPVQFGHG). Active-site residues include His-147 and Cys-203.

It belongs to the peptidase C14B family.

Functionally, involved in cell death (apoptosis). This is Metacaspase-1 (MCA1) from Ajellomyces capsulatus (strain NAm1 / WU24) (Darling's disease fungus).